Here is a 3933-residue protein sequence, read N- to C-terminus: Protein DOP1 homolog PFC0245c (3933 aa).

The next 4 membrane-spanning stretches (helical) occupy residues 70-90 (LNPL…SSIF), 98-118 (FINN…HCTI), 140-160 (IFAY…NNIL), and 163-183 (IYSI…WLLL). Disordered regions lie at residues 468–494 (RLNN…KYQG), 543–600 (ININ…NMLH), and 614–656 (KKIN…SSSS). Positions 470–486 (NNNNNNNNNNNNNNNNN) are enriched in low complexity. Residues 546-561 (NDDDNLNYDDNEDDEY) are compositionally biased toward acidic residues. 2 stretches are compositionally biased toward low complexity: residues 563-576 (NYHN…NYFN) and 585-597 (ENNN…NNNN). Residues 620 to 651 (GQTNNYDDDEEEEDEEEEDNNNNTSYNNNNNN) are a coiled coil. Residues 625–639 (YDDDEEEEDEEEEDN) show a composition bias toward acidic residues. The segment covering 640–656 (NNNTSYNNNNNNSSSSS) has biased composition (low complexity). The next 3 membrane-spanning stretches (helical) occupy residues 782–802 (MLNL…YTFY), 842–862 (YLYI…MNFL), and 1186–1206 (FYFW…KSLL). A compositionally biased stretch (acidic residues) spans 1216–1255 (DDTDDDDDDDDDDDDEEEDDDDEDDDDEDDEEEDDEEDLG). Disordered stretches follow at residues 1216 to 1284 (DDTD…MNKK) and 1361 to 1405 (TNNN…NNFN). The span at 1263-1284 (SSKKGKKKKKKSVHKNKLMNKK) shows a compositional bias: basic residues. Residues 1349 to 1403 (ELNKMKYMNEDITNNNNNINNNSNNNNNNKNNINNNNNNNNNNNNNNNNLNNLNN) adopt a coiled-coil conformation. Residues 1362 to 1405 (NNNNNINNNSNNNNNNKNNINNNNNNNNNNNNNNNNLNNLNNFN) are compositionally biased toward low complexity. Transmembrane regions (helical) follow at residues 1462 to 1482 (FIKL…MFCL) and 1997 to 2017 (KNIF…KLIY). The segment at 2691-2739 (HRRKMNRQNIRTDSSNNNNNNNINSNNNNNNNNNNNNNNNNNNNNNIYN) is disordered. Residues 2704-2739 (SSNNNNNNNINSNNNNNNNNNNNNNNNNNNNNNIYN) are compositionally biased toward low complexity. Transmembrane regions (helical) follow at residues 2860-2880 (INLN…CTLT), 2905-2925 (IMSS…HIYV), 3017-3037 (YSEI…YHTV), 3200-3220 (ILIL…YIII), and 3276-3296 (IIIN…SWIF). The disordered stretch occupies residues 3620–3646 (LKNEKSTRTYNSSLQEGSDYDEEEDEE). A compositionally biased stretch (acidic residues) spans 3637–3646 (SDYDEEEDEE). Positions 3897–3925 (KEETIILLKELNSVENDINDLFLEVDLNE) form a coiled coil.

Belongs to the DOP1 family.

It localises to the membrane. Its function is as follows. May be involved in protein traffic between late Golgi and early endosomes. This Plasmodium falciparum (isolate 3D7) protein is Protein DOP1 homolog PFC0245c.